The chain runs to 180 residues: Translation initiation factor IF-3 (180 aa).

The protein belongs to the IF-3 family. Monomer.

Its subcellular location is the cytoplasm. In terms of biological role, IF-3 binds to the 30S ribosomal subunit and shifts the equilibrium between 70S ribosomes and their 50S and 30S subunits in favor of the free subunits, thus enhancing the availability of 30S subunits on which protein synthesis initiation begins. This Pectobacterium atrosepticum (strain SCRI 1043 / ATCC BAA-672) (Erwinia carotovora subsp. atroseptica) protein is Translation initiation factor IF-3.